Consider the following 122-residue polypeptide: NADPH-dependent 7-cyano-7-deazaguanine reductase (122 aa).

The Thioimide intermediate role is filled by Cys34. The Proton donor role is filled by Asp41. Substrate is bound by residues 56-58 (VEL) and 75-76 (HE).

This sequence belongs to the GTP cyclohydrolase I family. QueF type 1 subfamily.

The protein resides in the cytoplasm. The catalysed reaction is 7-aminomethyl-7-carbaguanine + 2 NADP(+) = 7-cyano-7-deazaguanine + 2 NADPH + 3 H(+). The protein operates within tRNA modification; tRNA-queuosine biosynthesis. In terms of biological role, catalyzes the NADPH-dependent reduction of 7-cyano-7-deazaguanine (preQ0) to 7-aminomethyl-7-deazaguanine (preQ1). In Anaeromyxobacter sp. (strain Fw109-5), this protein is NADPH-dependent 7-cyano-7-deazaguanine reductase.